A 381-amino-acid polypeptide reads, in one-letter code: Chaperone protein DnaJ (381 aa).

The J domain occupies 5–70 (DYYEVLGLQK…QKRAAYDQYG (66 aa)). The segment at 133-211 (GTTKDIQINT…CHGEGRVHKK (79 aa)) adopts a CR-type zinc-finger fold. Zn(2+) contacts are provided by cysteine 146, cysteine 149, cysteine 163, cysteine 166, cysteine 185, cysteine 188, cysteine 199, and cysteine 202. 4 CXXCXGXG motif repeats span residues 146–153 (CDSCGGSG), 163–170 (CPHCHGSG), 185–192 (CPTCHGSG), and 199–206 (CRSCHGEG).

The protein belongs to the DnaJ family. Homodimer. Requires Zn(2+) as cofactor.

Its subcellular location is the cytoplasm. In terms of biological role, participates actively in the response to hyperosmotic and heat shock by preventing the aggregation of stress-denatured proteins and by disaggregating proteins, also in an autonomous, DnaK-independent fashion. Unfolded proteins bind initially to DnaJ; upon interaction with the DnaJ-bound protein, DnaK hydrolyzes its bound ATP, resulting in the formation of a stable complex. GrpE releases ADP from DnaK; ATP binding to DnaK triggers the release of the substrate protein, thus completing the reaction cycle. Several rounds of ATP-dependent interactions between DnaJ, DnaK and GrpE are required for fully efficient folding. Also involved, together with DnaK and GrpE, in the DNA replication of plasmids through activation of initiation proteins. In Haemophilus influenzae (strain 86-028NP), this protein is Chaperone protein DnaJ.